Consider the following 247-residue polypeptide: Small ribosomal subunit protein uS2 (247 aa).

This sequence belongs to the universal ribosomal protein uS2 family.

The protein is Small ribosomal subunit protein uS2 of Ralstonia nicotianae (strain ATCC BAA-1114 / GMI1000) (Ralstonia solanacearum).